Here is a 180-residue protein sequence, read N- to C-terminus: ATP-dependent protease subunit HslV (180 aa).

The active site involves T7. Residues G163, C166, and T169 each coordinate Na(+).

The protein belongs to the peptidase T1B family. HslV subfamily. A double ring-shaped homohexamer of HslV is capped on each side by a ring-shaped HslU homohexamer. The assembly of the HslU/HslV complex is dependent on binding of ATP.

Its subcellular location is the cytoplasm. The catalysed reaction is ATP-dependent cleavage of peptide bonds with broad specificity.. With respect to regulation, allosterically activated by HslU binding. Protease subunit of a proteasome-like degradation complex believed to be a general protein degrading machinery. The chain is ATP-dependent protease subunit HslV from Alcanivorax borkumensis (strain ATCC 700651 / DSM 11573 / NCIMB 13689 / SK2).